Consider the following 132-residue polypeptide: uncharacterized protein (132 aa).

Helical transmembrane passes span 7 to 29 (LALL…PTLF), 44 to 62 (VFPV…SLFL), 69 to 88 (LFLS…EFIV), and 108 to 130 (GVSM…ILIF).

It localises to the cell membrane. This is an uncharacterized protein from Aquifex aeolicus (strain VF5).